A 203-amino-acid chain; its full sequence is dITP/XTP pyrophosphatase (203 aa).

16–21 lines the substrate pocket; it reads SHNRGK. Residues Glu48 and Asp77 each contribute to the Mg(2+) site. Asp77 functions as the Proton acceptor in the catalytic mechanism. Substrate is bound by residues Ser78, 161–164, Lys184, and 189–190; these read FGYD and HR.

The protein belongs to the HAM1 NTPase family. In terms of assembly, homodimer. It depends on Mg(2+) as a cofactor.

The catalysed reaction is XTP + H2O = XMP + diphosphate + H(+). It carries out the reaction dITP + H2O = dIMP + diphosphate + H(+). It catalyses the reaction ITP + H2O = IMP + diphosphate + H(+). Functionally, pyrophosphatase that catalyzes the hydrolysis of nucleoside triphosphates to their monophosphate derivatives, with a high preference for the non-canonical purine nucleotides XTP (xanthosine triphosphate), dITP (deoxyinosine triphosphate) and ITP. Seems to function as a house-cleaning enzyme that removes non-canonical purine nucleotides from the nucleotide pool, thus preventing their incorporation into DNA/RNA and avoiding chromosomal lesions. This is dITP/XTP pyrophosphatase from Rhodospirillum centenum (strain ATCC 51521 / SW).